Consider the following 623-residue polypeptide: Chaperone protein HtpG (623 aa).

The interval 1-336 (MSETNTQKAA…TEDLPLNVSR (336 aa)) is a; substrate-binding. A b region spans residues 337 to 546 (EMLQATPVLA…DGGPDLTMQR (210 aa)). Residues 547–623 (LMRRSGQAMP…ATLLAGPAAE (77 aa)) form a c region.

Belongs to the heat shock protein 90 family. In terms of assembly, homodimer.

It localises to the cytoplasm. Functionally, molecular chaperone. Has ATPase activity. The sequence is that of Chaperone protein HtpG from Gluconobacter oxydans (strain 621H) (Gluconobacter suboxydans).